A 425-amino-acid polypeptide reads, in one-letter code: Inositol hexakisphosphate kinase 2 (425 aa).

Residues 206 to 208 (ENL) and Asp219 contribute to the ATP site. Residues 215–223 (PCVLDLKMG), Lys221, and 235–242 (KAANQIRK) each bind substrate. Asp382 is a binding site for ATP. Residue His385 participates in substrate binding.

This sequence belongs to the inositol phosphokinase (IPK) family. In terms of tissue distribution, detected in kidney, intestine, liver and heart.

Its subcellular location is the nucleus. It catalyses the reaction 1D-myo-inositol hexakisphosphate + ATP = 5-diphospho-1D-myo-inositol 1,2,3,4,6-pentakisphosphate + ADP. Its pathway is phospholipid metabolism; phosphatidylinositol metabolism. Functionally, converts inositol hexakisphosphate (InsP6) to diphosphoinositol pentakisphosphate (InsP7/PP-InsP5). The polypeptide is Inositol hexakisphosphate kinase 2 (IP6K2) (Oryctolagus cuniculus (Rabbit)).